The following is a 1240-amino-acid chain: DNA excision repair protein ERCC-6-like (1240 aa).

Phosphoserine is present on S14. A TPR 1 repeat occupies 21 to 54; the sequence is YLRYVQEAKEAAKNGDLEESLKLFNLAKDIFPTK. Residues 110–278 form the Helicase ATP-binding domain; sequence SLYKDGRKGG…WSLFDFACQG (169 aa). 123-130 lines the ATP pocket; that stretch reads DDMGLGKT. The DEAH box signature appears at 229–232; the sequence is DEAH. Residues 467–631 form the Helicase C-terminal domain; the sequence is FLMSLLERLQ…FTKQELKELF (165 aa). The interval 736-760 is disordered; it reads FPSQQKKKGTEFNKPQPQPSRLLTK. Positions 748 to 760 are enriched in polar residues; the sequence is NKPQPQPSRLLTK. Phosphoserine occurs at positions 755 and 773. The segment at 778 to 813 is disordered; sequence DQSAESEPQEHSEVHDVTSLQGSHHFNSTSDAGTIA. The segment covering 795-809 has biased composition (polar residues); sequence TSLQGSHHFNSTSDA. S821 carries the post-translational modification Phosphoserine. Positions 845 to 879 are disordered; it reads QKKGLQASPGQEAPSENLGSFHYLPRESSKASLGP. A phosphoserine mark is found at S966, S998, S1001, and S1021. The tract at residues 974–1085 is disordered; that stretch reads KEKSLQSPAA…EVNTSLHSRR (112 aa). Positions 978–998 are enriched in polar residues; that stretch reads LQSPAANSRAKSALTLSLDSS. The segment covering 1049-1065 has biased composition (polar residues); the sequence is SVKQFDASTPQSGSNPS. Residue T1057 is modified to Phosphothreonine. Phosphoserine occurs at positions 1092 and 1112. Residues 1104–1117 are compositionally biased toward acidic residues; the sequence is MEERLDNSSEEESE. The tract at residues 1104–1185 is disordered; it reads MEERLDNSSE…MPDPPQDLAV (82 aa). Positions 1135-1165 are enriched in polar residues; that stretch reads EQPSGATLASGNKSSNLTMSEPTSPAPQSSP. A Phosphoserine modification is found at S1172. A TPR 2 repeat occupies 1191–1224; sequence YESLVARGKELKECGKIQEALNCLVKALDIKSAD.

This sequence belongs to the SNF2/RAD54 helicase family. As to quaternary structure, interacts with PLK1, which phosphorylates it. Both proteins are mutually dependent on each other for correct subcellular localization. Interacts (via N-terminal TPR repeat) with BEND3 (via BEN domains 1 and 3); the interaction is direct. Phosphorylation by PLK1 prevents the association with chromosome arms and restricts its localization to the kinetochore-centromere region. Expressed mainly in the neural tube and heart of 10.5 dpc embryo. Significantly down-regulated after alcohol exposure in embryonic brain and heart, but not in embryonic kidney, liver, or lung.

It is found in the chromosome. The protein localises to the centromere. The protein resides in the kinetochore. It carries out the reaction ATP + H2O = ADP + phosphate + H(+). DNA helicase that acts as a tension sensor that associates with catenated DNA which is stretched under tension until it is resolved during anaphase. Functions as ATP-dependent DNA translocase. Can promote Holliday junction branch migration (in vitro). The protein is DNA excision repair protein ERCC-6-like (Ercc6l) of Mus musculus (Mouse).